The sequence spans 459 residues: uncharacterized protein (459 aa).

A TRAM domain is found at 9–67 (KLEVGQTFPVTIKRLGINGEGVGYFKRQVVFIPGALPGEEVVAETTKIQRGFAEAKVKK). [4Fe-4S] cluster is bound by residues Cys80, Cys86, Cys89, and Cys168. The S-adenosyl-L-methionine site is built by Gln292, Tyr321, Asp342, and Asp390. The active-site Nucleophile is the Cys417.

This sequence belongs to the class I-like SAM-binding methyltransferase superfamily. RNA M5U methyltransferase family.

This is an uncharacterized protein from Bacillus anthracis.